The primary structure comprises 384 residues: Glucans biosynthesis protein C (384 aa).

10 helical membrane-spanning segments follow: residues 17–37, 54–74, 91–111, 140–160, 173–193, 212–232, 240–260, 274–294, 311–331, and 338–358; these read AWLM…THSW, FIHA…SYML, VGIP…ILLQ, LWFL…FTWF, AISL…YAAI, FIVM…LAFI, FTTP…AYLL, TESV…FSLG, ASLF…AYIT, and LIGF…LYEI.

This sequence belongs to the acyltransferase 3 family. OpgC subfamily.

Its subcellular location is the cell membrane. It functions in the pathway glycan metabolism; osmoregulated periplasmic glucan (OPG) biosynthesis. In terms of biological role, necessary for the succinyl substitution of periplasmic glucans. Could catalyze the transfer of succinyl residues from the cytoplasmic side of the membrane to the nascent glucan backbones on the periplasmic side of the membrane. The sequence is that of Glucans biosynthesis protein C from Salmonella gallinarum (strain 287/91 / NCTC 13346).